Consider the following 371-residue polypeptide: Cyanide hydratase (371 aa).

In terms of domain architecture, CN hydrolase spans 6-285; the sequence is YKAAAVTSEP…DGLLYVDIDL (280 aa). Glu46 acts as the Proton acceptor in catalysis. Lys128 is an active-site residue. Cys163 (nucleophile) is an active-site residue. Over residues 339–353 the composition is skewed to basic and acidic residues; sequence GLNRPLDPPKDERHG. Positions 339-371 are disordered; the sequence is GLNRPLDPPKDERHGIVGVAGQKSAEQRKAGDL.

Belongs to the carbon-nitrogen hydrolase superfamily. Nitrilase family. Oligomer of dimers, forming left-handed helical fibers.

It catalyses the reaction formamide = hydrogen cyanide + H2O. Catalyzes the hydration of cyanide to formamide. Degradation of cyanide may be important for plant pathogenic fungi in infection of cyanogenic plants. Also acts on 2-cyanopyridine, fumaronitrile and benzonitrile, albeit at a lower rate. In Stereum hirsutum (strain FP-91666) (White-rot fungus), this protein is Cyanide hydratase (nit).